We begin with the raw amino-acid sequence, 179 residues long: Transcription factor E (179 aa).

One can recognise an HTH TFE/IIEalpha-type domain in the interval 1-102; sequence MAKKKVKYTF…YWRFDSRKAA (102 aa).

This sequence belongs to the TFE family. Monomer. Interaction with RNA polymerase subunits RpoF and RpoE is necessary for Tfe stimulatory transcription activity. Able to interact with Tbp and RNA polymerase in the absence of DNA promoter. Interacts both with the preinitiation and elongation complexes.

Functionally, transcription factor that plays a role in the activation of archaeal genes transcribed by RNA polymerase. Facilitates transcription initiation by enhancing TATA-box recognition by TATA-box-binding protein (Tbp), and transcription factor B (Tfb) and RNA polymerase recruitment. Not absolutely required for transcription in vitro, but particularly important in cases where Tbp or Tfb function is not optimal. It dynamically alters the nucleic acid-binding properties of RNA polymerases by stabilizing the initiation complex and destabilizing elongation complexes. Seems to translocate with the RNA polymerase following initiation and acts by binding to the non template strand of the transcription bubble in elongation complexes. The protein is Transcription factor E of Methanosphaera stadtmanae (strain ATCC 43021 / DSM 3091 / JCM 11832 / MCB-3).